Consider the following 362-residue polypeptide: Phosphoserine aminotransferase (362 aa).

Residues Ser-9 and Arg-42 each coordinate L-glutamate. Pyridoxal 5'-phosphate contacts are provided by residues 76–77, Trp-102, Thr-153, Asp-174, and Gln-197; that span reads GR. The residue at position 198 (Lys-198) is an N6-(pyridoxal phosphate)lysine. Residue 239 to 240 participates in pyridoxal 5'-phosphate binding; that stretch reads NT.

It belongs to the class-V pyridoxal-phosphate-dependent aminotransferase family. SerC subfamily. Homodimer. The cofactor is pyridoxal 5'-phosphate.

Its subcellular location is the cytoplasm. It catalyses the reaction O-phospho-L-serine + 2-oxoglutarate = 3-phosphooxypyruvate + L-glutamate. It carries out the reaction 4-(phosphooxy)-L-threonine + 2-oxoglutarate = (R)-3-hydroxy-2-oxo-4-phosphooxybutanoate + L-glutamate. It functions in the pathway amino-acid biosynthesis; L-serine biosynthesis; L-serine from 3-phospho-D-glycerate: step 2/3. The protein operates within cofactor biosynthesis; pyridoxine 5'-phosphate biosynthesis; pyridoxine 5'-phosphate from D-erythrose 4-phosphate: step 3/5. In terms of biological role, catalyzes the reversible conversion of 3-phosphohydroxypyruvate to phosphoserine and of 3-hydroxy-2-oxo-4-phosphonooxybutanoate to phosphohydroxythreonine. The sequence is that of Phosphoserine aminotransferase from Escherichia fergusonii (strain ATCC 35469 / DSM 13698 / CCUG 18766 / IAM 14443 / JCM 21226 / LMG 7866 / NBRC 102419 / NCTC 12128 / CDC 0568-73).